The sequence spans 323 residues: tRNA U34 carboxymethyltransferase (323 aa).

Residues Lys91, Trp105, Lys110, Gly130, 152 to 154, 181 to 182, Met196, Tyr200, and Arg315 each bind carboxy-S-adenosyl-L-methionine; these read DPT and IE.

This sequence belongs to the class I-like SAM-binding methyltransferase superfamily. CmoB family. As to quaternary structure, homotetramer.

It carries out the reaction carboxy-S-adenosyl-L-methionine + 5-hydroxyuridine(34) in tRNA = 5-carboxymethoxyuridine(34) in tRNA + S-adenosyl-L-homocysteine + H(+). Functionally, catalyzes carboxymethyl transfer from carboxy-S-adenosyl-L-methionine (Cx-SAM) to 5-hydroxyuridine (ho5U) to form 5-carboxymethoxyuridine (cmo5U) at position 34 in tRNAs. This Photorhabdus laumondii subsp. laumondii (strain DSM 15139 / CIP 105565 / TT01) (Photorhabdus luminescens subsp. laumondii) protein is tRNA U34 carboxymethyltransferase.